Reading from the N-terminus, the 460-residue chain is Ammonium transporter Rh type B (460 aa).

The Cytoplasmic portion of the chain corresponds to 1-10 (MTGYSTNMRI). The chain crosses the membrane as a helical span at residues 11 to 31 (KLPVFCLLLEFITIILFAVFV). At 32-62 (RYDHESDAKQWHDEMRNHSVQNAENDFYFRY) the chain is on the extracellular side. N-linked (GlcNAc...) asparagine glycosylation is present at asparagine 48. A helical membrane pass occupies residues 63 to 83 (PSFQDVHVMIFIGFGFLMTFL). The Cytoplasmic segment spans residues 84–87 (KRYG). A helical membrane pass occupies residues 88 to 108 (FSSVAFNFLIAAFGLQWSTLI). Topologically, residues 109 to 125 (QGFFHGFHDGKIHVGIE) are extracellular. The helical transmembrane segment at 126-146 (SMINADFCTGAVLISFGAVLG) threads the bilayer. Residues 147–150 (KTSP) lie on the Cytoplasmic side of the membrane. A helical membrane pass occupies residues 151 to 171 (VQLIVMTLIEVTLFGINEYII). Residues 172–179 (LNIVGAKD) are Extracellular-facing. Residues 180-202 (AGGSMTIHTFGAYFGLIVSRVLY) traverse the membrane as a helical segment. Residues 203-220 (RDDLEKSRQREGSVYHSD) are Cytoplasmic-facing. Residues 221-241 (LFAMIGTIYLWMFWPSFNSAI) form a helical membrane-spanning segment. The Extracellular portion of the chain corresponds to 242–252 (TAHGDDQHRTV). A helical transmembrane segment spans residues 253 to 273 (MNTYYSLAACTLATFGFSALL). Residues 274 to 283 (NGEGKLDMVH) are Cytoplasmic-facing. Residues 284–304 (IQNAALAGGVAVGTSGEMMLT) traverse the membrane as a helical segment. Residue proline 305 is a topological domain, extracellular. The chain crosses the membrane as a helical span at residues 306–326 (FGAMIAGTLAGMISVLGYKYL). Topologically, residues 327–347 (TPVLDSKLKIQDTCGVHNLHG) are cytoplasmic. Residues 348-368 (MPGILGALIGAIVALFATAEI) form a helical membrane-spanning segment. At 369 to 394 (YGAGMEDVFPLISDGSRTAKQQSLYQ) the chain is on the extracellular side. The helical transmembrane segment at 395 to 415 (FLALLVALGFAILGGLVVGFI) threads the bilayer. Over 416 to 460 (LKLPIFGTPSDAECFEDAVYWEVPGGEGHQQLTVVINNEDPDTQA) the chain is Cytoplasmic.

This sequence belongs to the ammonium transporter (TC 2.A.49) family. Rh subfamily.

The protein resides in the basolateral cell membrane. It is found in the cytoplasmic vesicle membrane. Functionally, functions as a specific ammonium transporter. This chain is Ammonium transporter Rh type B (rhbg), found in Xenopus tropicalis (Western clawed frog).